Here is a 302-residue protein sequence, read N- to C-terminus: Protoheme IX farnesyltransferase (302 aa).

9 helical membrane passes run 28 to 48 (LALL…SLDP), 50 to 70 (MLAL…AFNM), 93 to 115 (LNPY…SAAA), 119 to 138 (YVAL…YTQL), 147 to 167 (IIFG…AAAG), 172 to 192 (GGVL…WFLG), 219 to 239 (LIAV…LYYG), 242 to 262 (FLTA…IGGF), and 271 to 291 (ALKL…ILPL).

It belongs to the UbiA prenyltransferase family. Protoheme IX farnesyltransferase subfamily.

The protein localises to the cell membrane. It carries out the reaction heme b + (2E,6E)-farnesyl diphosphate + H2O = Fe(II)-heme o + diphosphate. The protein operates within porphyrin-containing compound metabolism; heme O biosynthesis; heme O from protoheme: step 1/1. Functionally, converts heme B (protoheme IX) to heme O by substitution of the vinyl group on carbon 2 of heme B porphyrin ring with a hydroxyethyl farnesyl side group. In Aeropyrum pernix (strain ATCC 700893 / DSM 11879 / JCM 9820 / NBRC 100138 / K1), this protein is Protoheme IX farnesyltransferase.